The chain runs to 94 residues: Small ribosomal subunit protein uS19 (94 aa).

The interval 73–94 is disordered; that stretch reads EFSPTRRFGGHADKKSKKGQVK.

The protein belongs to the universal ribosomal protein uS19 family.

In terms of biological role, protein S19 forms a complex with S13 that binds strongly to the 16S ribosomal RNA. The sequence is that of Small ribosomal subunit protein uS19 from Kosmotoga olearia (strain ATCC BAA-1733 / DSM 21960 / TBF 19.5.1).